A 179-amino-acid chain; its full sequence is Large ribosomal subunit protein uL5 (179 aa).

The protein belongs to the universal ribosomal protein uL5 family. Part of the 50S ribosomal subunit; part of the 5S rRNA/L5/L18/L25 subcomplex. Contacts the 5S rRNA and the P site tRNA. Forms a bridge to the 30S subunit in the 70S ribosome.

This is one of the proteins that bind and probably mediate the attachment of the 5S RNA into the large ribosomal subunit, where it forms part of the central protuberance. In the 70S ribosome it contacts protein S13 of the 30S subunit (bridge B1b), connecting the 2 subunits; this bridge is implicated in subunit movement. Contacts the P site tRNA; the 5S rRNA and some of its associated proteins might help stabilize positioning of ribosome-bound tRNAs. This Pseudomonas aeruginosa (strain LESB58) protein is Large ribosomal subunit protein uL5.